We begin with the raw amino-acid sequence, 190 residues long: Heme-binding protein 1 (190 aa).

It belongs to the HEBP family. In terms of assembly, monomer.

The protein localises to the cytoplasm. In terms of biological role, may bind free porphyrinogens that may be present in the cell and thus facilitate removal of these potentially toxic compound. Binds with a high affinity to one molecule of heme or porphyrins. It binds metalloporphyrins, free porphyrins and N-methylprotoporphyrin with similar affinities. This is Heme-binding protein 1 (hebp1) from Xenopus tropicalis (Western clawed frog).